The primary structure comprises 140 residues: 3-hydroxyacyl-[acyl-carrier-protein] dehydratase FabZ (140 aa).

H47 is an active-site residue.

Belongs to the thioester dehydratase family. FabZ subfamily.

It is found in the cytoplasm. The catalysed reaction is a (3R)-hydroxyacyl-[ACP] = a (2E)-enoyl-[ACP] + H2O. In terms of biological role, involved in unsaturated fatty acids biosynthesis. Catalyzes the dehydration of short chain beta-hydroxyacyl-ACPs and long chain saturated and unsaturated beta-hydroxyacyl-ACPs. This chain is 3-hydroxyacyl-[acyl-carrier-protein] dehydratase FabZ, found in Streptococcus pneumoniae serotype 4 (strain ATCC BAA-334 / TIGR4).